The primary structure comprises 419 residues: Serine hydroxymethyltransferase (419 aa).

(6S)-5,6,7,8-tetrahydrofolate is bound by residues Leu121 and 125 to 127; that span reads GHL. An N6-(pyridoxal phosphate)lysine modification is found at Lys230. (6S)-5,6,7,8-tetrahydrofolate contacts are provided by residues Glu246 and 355–357; that span reads SPF.

It belongs to the SHMT family. In terms of assembly, homodimer. Pyridoxal 5'-phosphate serves as cofactor.

The protein localises to the cytoplasm. The catalysed reaction is (6R)-5,10-methylene-5,6,7,8-tetrahydrofolate + glycine + H2O = (6S)-5,6,7,8-tetrahydrofolate + L-serine. The protein operates within one-carbon metabolism; tetrahydrofolate interconversion. Its pathway is amino-acid biosynthesis; glycine biosynthesis; glycine from L-serine: step 1/1. Its function is as follows. Catalyzes the reversible interconversion of serine and glycine with tetrahydrofolate (THF) serving as the one-carbon carrier. This reaction serves as the major source of one-carbon groups required for the biosynthesis of purines, thymidylate, methionine, and other important biomolecules. Also exhibits THF-independent aldolase activity toward beta-hydroxyamino acids, producing glycine and aldehydes, via a retro-aldol mechanism. The chain is Serine hydroxymethyltransferase from Streptococcus suis (strain 98HAH33).